Here is a 250-residue protein sequence, read N- to C-terminus: 5-oxoprolinase subunit A (250 aa).

The protein belongs to the LamB/PxpA family. As to quaternary structure, forms a complex composed of PxpA, PxpB and PxpC.

It carries out the reaction 5-oxo-L-proline + ATP + 2 H2O = L-glutamate + ADP + phosphate + H(+). In terms of biological role, catalyzes the cleavage of 5-oxoproline to form L-glutamate coupled to the hydrolysis of ATP to ADP and inorganic phosphate. The polypeptide is 5-oxoprolinase subunit A (Streptomyces avermitilis (strain ATCC 31267 / DSM 46492 / JCM 5070 / NBRC 14893 / NCIMB 12804 / NRRL 8165 / MA-4680)).